Consider the following 218-residue polypeptide: 7-cyano-7-deazaguanine synthase (218 aa).

Position 9-19 (9-19) interacts with ATP; it reads YSGGMDSFTVL. Residues Cys185, Cys193, Cys196, and Cys199 each coordinate Zn(2+).

Belongs to the QueC family. The cofactor is Zn(2+).

It carries out the reaction 7-carboxy-7-deazaguanine + NH4(+) + ATP = 7-cyano-7-deazaguanine + ADP + phosphate + H2O + H(+). The protein operates within purine metabolism; 7-cyano-7-deazaguanine biosynthesis. In terms of biological role, catalyzes the ATP-dependent conversion of 7-carboxy-7-deazaguanine (CDG) to 7-cyano-7-deazaguanine (preQ(0)). In Pseudoalteromonas translucida (strain TAC 125), this protein is 7-cyano-7-deazaguanine synthase.